A 92-amino-acid chain; its full sequence is UPF0223 protein SUB0967 (92 aa).

It belongs to the UPF0223 family.

The polypeptide is UPF0223 protein SUB0967 (Streptococcus uberis (strain ATCC BAA-854 / 0140J)).